A 28-amino-acid chain; its full sequence is U-actitoxin-Ate1 (28 aa).

A signal peptide spans M1 to S15. A disulfide bridge connects residues C20 and C26.

As to quaternary structure, monomer in solution. In terms of processing, may be N-glycosylated at Asn-22. Activity with this modification has not be tested. In terms of tissue distribution, highly expressed in the tentacles. Weakly expressed in acrorhagi and mesenteric filaments.

Its subcellular location is the secreted. The protein localises to the nematocyst. Functionally, probable toxin expected to be employed in prey capture and/or defense against predators (based on its abundance in tentacles). Has only a weak affinity for lipid membranes. Shows moderate cytotoxic activity against breast cancer cell lines (MCF-7 and MDA-MB-231). This Actinia tenebrosa (Australian red waratah sea anemone) protein is U-actitoxin-Ate1.